The primary structure comprises 510 residues: 2,3-bisphosphoglycerate-independent phosphoglycerate mutase (510 aa).

Mn(2+) is bound by residues aspartate 13 and serine 63. Serine 63 (phosphoserine intermediate) is an active-site residue. Residues histidine 124, 154 to 155 (RD), arginine 186, arginine 192, 262 to 265 (RADR), and lysine 334 each bind substrate. Aspartate 401, histidine 405, aspartate 442, histidine 443, and histidine 461 together coordinate Mn(2+).

This sequence belongs to the BPG-independent phosphoglycerate mutase family. Monomer. It depends on Mn(2+) as a cofactor.

The catalysed reaction is (2R)-2-phosphoglycerate = (2R)-3-phosphoglycerate. It functions in the pathway carbohydrate degradation; glycolysis; pyruvate from D-glyceraldehyde 3-phosphate: step 3/5. Its function is as follows. Catalyzes the interconversion of 2-phosphoglycerate and 3-phosphoglycerate. This is 2,3-bisphosphoglycerate-independent phosphoglycerate mutase from Vibrio cholerae serotype O1 (strain ATCC 39541 / Classical Ogawa 395 / O395).